We begin with the raw amino-acid sequence, 161 residues long: UPF0178 protein BSUIS_A1819 (161 aa).

The protein belongs to the UPF0178 family.

In Brucella suis (strain ATCC 23445 / NCTC 10510), this protein is UPF0178 protein BSUIS_A1819.